The sequence spans 346 residues: Threonylcarbamoyl-AMP synthase (346 aa).

A YrdC-like domain is found at 18-205 (DPQIAQAAAL…IPVLLRPGGI (188 aa)). Thr-40 contributes to the L-threonine binding site. 2 residues coordinate ATP: Arg-63 and Asn-67. L-threonine is bound at residue His-72. Thr-123 serves as a coordination point for ATP. L-threonine-binding residues include Arg-127 and Ala-147. ATP contacts are provided by Ser-149 and Ser-157. An L-threonine-binding site is contributed by Ser-187. ATP-binding residues include Arg-201 and Tyr-240.

Belongs to the SUA5 family.

It localises to the cytoplasm. It catalyses the reaction L-threonine + hydrogencarbonate + ATP = L-threonylcarbamoyladenylate + diphosphate + H2O. Functionally, required for the formation of a threonylcarbamoyl group on adenosine at position 37 (t(6)A37) in tRNAs that read codons beginning with adenine. Catalyzes the conversion of L-threonine, HCO(3)(-)/CO(2) and ATP to give threonylcarbamoyl-AMP (TC-AMP) as the acyladenylate intermediate, with the release of diphosphate. Is also able to catalyze the reverse reaction in vitro, i.e. the formation of ATP from TC-AMP and PPi. This is Threonylcarbamoyl-AMP synthase (ywlC) from Bacillus subtilis (strain 168).